The chain runs to 336 residues: DNA polymerase beta (336 aa).

K(+)-binding residues include lysine 59, leucine 61, and valine 64. Na(+) is bound by residues lysine 59, leucine 61, and valine 64. Residue lysine 71 is the Nucleophile; Schiff-base intermediate with DNA; for 5'-dRP lyase activity of the active site. Residue arginine 82 is modified to Omega-N-methylarginine; by PRMT6. Threonine 100, valine 102, and isoleucine 105 together coordinate K(+). Positions 100, 102, and 105 each coordinate Na(+). Residue arginine 148 coordinates a 2'-deoxyribonucleoside 5'-triphosphate. Arginine 151 is modified (omega-N-methylarginine; by PRMT6). A 2'-deoxyribonucleoside 5'-triphosphate contacts are provided by serine 179, arginine 182, glycine 188, and aspartate 189. The DNA-binding stretch occupies residues 182 to 191 (RGAESSGDID). Mg(2+) contacts are provided by aspartate 189, aspartate 191, and aspartate 257.

It belongs to the DNA polymerase type-X family. Requires Mg(2+) as cofactor. Post-translationally, methylation by PRMT6 stimulates the polymerase activity by enhancing DNA binding and processivity. Ubiquitinated: monoubiquitinated by huwe1/arf-bp1. Monoubiquitinated protein is then the target of stub1/chip, which catalyzes polyubiquitination from monoubiquitin, leading to degradation by the proteasome. usp47 mediates the deubiquitination of monoubiquitinated protein, preventing polyubiquitination by STUB1/CHIP and its subsequent degradation.

The protein localises to the nucleus. The protein resides in the cytoplasm. The enzyme catalyses DNA(n) + a 2'-deoxyribonucleoside 5'-triphosphate = DNA(n+1) + diphosphate. It catalyses the reaction a 5'-end 2'-deoxyribose-2'-deoxyribonucleotide-DNA = (2E,4S)-4-hydroxypenten-2-al-5-phosphate + a 5'-end 5'-phospho-2'-deoxyribonucleoside-DNA + H(+). The catalysed reaction is 2'-deoxyribonucleotide-(2'-deoxyribose 5'-phosphate)-2'-deoxyribonucleotide-DNA = a 3'-end 2'-deoxyribonucleotide-(2,3-dehydro-2,3-deoxyribose 5'-phosphate)-DNA + a 5'-end 5'-phospho-2'-deoxyribonucleoside-DNA + H(+). Its function is as follows. Repair polymerase that plays a key role in base-excision repair. During this process, the damaged base is excised by specific DNA glycosylases, the DNA backbone is nicked at the abasic site by an apurinic/apyrimidic (AP) endonuclease, and POLB removes 5'-deoxyribose-phosphate from the preincised AP site acting as a 5'-deoxyribose-phosphate lyase (5'-dRP lyase); through its DNA polymerase activity, it adds one nucleotide to the 3' end of the arising single-nucleotide gap. Conducts 'gap-filling' DNA synthesis in a stepwise distributive fashion rather than in a processive fashion as for other DNA polymerases. It is also able to cleave sugar-phosphate bonds 3' to an intact AP site, acting as an AP lyase. The sequence is that of DNA polymerase beta (polb) from Danio rerio (Zebrafish).